The sequence spans 94 residues: DNA-directed RNA polymerase subunit Rpo11 (94 aa).

Belongs to the archaeal Rpo11/eukaryotic RPB11/RPC19 RNA polymerase subunit family. As to quaternary structure, part of the RNA polymerase complex.

It localises to the cytoplasm. The enzyme catalyses RNA(n) + a ribonucleoside 5'-triphosphate = RNA(n+1) + diphosphate. DNA-dependent RNA polymerase (RNAP) catalyzes the transcription of DNA into RNA using the four ribonucleoside triphosphates as substrates. This Halobacterium salinarum (strain ATCC 700922 / JCM 11081 / NRC-1) (Halobacterium halobium) protein is DNA-directed RNA polymerase subunit Rpo11.